A 54-amino-acid chain; its full sequence is Zinc-containing ferredoxin A (54 aa).

The interval 1–21 (GIDPNYRTSRPEVGTHEGHKV) is disordered. An N-terminal extension region spans residues 1 to 36 (GIDPNYRTSRPEVGTHEGHKVYGPVENPKVLGIHGA). Basic and acidic residues predominate over residues 9–20 (SRPEVGTHEGHK). Zn(2+)-binding residues include His16 and His19. At Lys29 the chain carries N6-methyllysine. Residue His34 coordinates Zn(2+). The 4Fe-4S ferredoxin-type 1 domain occupies 35–54 (GAIVGVDFDLCIADGSCINA). [3Fe-4S] cluster is bound by residues Cys45 and Cys51.

It depends on [3Fe-4S] cluster as a cofactor. [4Fe-4S] cluster is required as a cofactor. Zn(2+) serves as cofactor.

Functionally, ferredoxins are iron-sulfur proteins that transfer electrons in a wide variety of metabolic reactions. This is Zinc-containing ferredoxin A (zfx) from Sulfuracidifex metallicus (Sulfolobus metallicus).